A 291-amino-acid chain; its full sequence is Bifunctional protein FolD (291 aa).

Residues 166–168 (GAG), Ile-191, and Ile-232 each bind NADP(+).

Belongs to the tetrahydrofolate dehydrogenase/cyclohydrolase family. As to quaternary structure, homodimer.

It carries out the reaction (6R)-5,10-methylene-5,6,7,8-tetrahydrofolate + NADP(+) = (6R)-5,10-methenyltetrahydrofolate + NADPH. It catalyses the reaction (6R)-5,10-methenyltetrahydrofolate + H2O = (6R)-10-formyltetrahydrofolate + H(+). It functions in the pathway one-carbon metabolism; tetrahydrofolate interconversion. In terms of biological role, catalyzes the oxidation of 5,10-methylenetetrahydrofolate to 5,10-methenyltetrahydrofolate and then the hydrolysis of 5,10-methenyltetrahydrofolate to 10-formyltetrahydrofolate. The chain is Bifunctional protein FolD from Aquifex aeolicus (strain VF5).